A 437-amino-acid chain; its full sequence is Neomycin resistance protein (437 aa).

Disordered regions lie at residues 161-285 and 305-338; these read GQRG…EEEA and VSGA…PVPD. Residues 203 to 229 show a composition bias toward low complexity; it reads PPTGARSPGATAGARATASTSSSSVRS. Residues 324–338 show a composition bias toward basic residues; it reads RRRHRGRRHGRPVPD.

This sequence belongs to the Gram-positive plasmids replication protein type 1 family.

In Streptomyces cyanogenus, this protein is Neomycin resistance protein.